We begin with the raw amino-acid sequence, 164 residues long: UPF0114 protein Sbal_0780 (164 aa).

Helical transmembrane passes span 15–35 (IMAP…VKFF), 53–73 (LVLL…IVMV), 109–129 (VAAS…MNAE), and 136–156 (IMWY…MGYL).

It belongs to the UPF0114 family.

It is found in the cell membrane. The polypeptide is UPF0114 protein Sbal_0780 (Shewanella baltica (strain OS155 / ATCC BAA-1091)).